The following is a 216-amino-acid chain: Thiopurine S-methyltransferase (216 aa).

4 residues coordinate S-adenosyl-L-methionine: Trp-11, Leu-46, Glu-67, and Arg-122.

This sequence belongs to the class I-like SAM-binding methyltransferase superfamily. TPMT family.

It is found in the cytoplasm. It catalyses the reaction S-adenosyl-L-methionine + a thiopurine = S-adenosyl-L-homocysteine + a thiopurine S-methylether.. The chain is Thiopurine S-methyltransferase from Vibrio parahaemolyticus serotype O3:K6 (strain RIMD 2210633).